A 691-amino-acid polypeptide reads, in one-letter code: DNA ligase (691 aa).

Residues Asp-41 to Asp-45, Ser-90 to Leu-91, and Glu-130 contribute to the NAD(+) site. The active-site N6-AMP-lysine intermediate is Lys-132. The NAD(+) site is built by Arg-153, Glu-190, Lys-307, and Lys-331. 4 residues coordinate Zn(2+): Cys-425, Cys-428, Cys-443, and Cys-449. In terms of domain architecture, BRCT spans Ala-610–Pro-691.

It belongs to the NAD-dependent DNA ligase family. LigA subfamily. Requires Mg(2+) as cofactor. It depends on Mn(2+) as a cofactor.

The catalysed reaction is NAD(+) + (deoxyribonucleotide)n-3'-hydroxyl + 5'-phospho-(deoxyribonucleotide)m = (deoxyribonucleotide)n+m + AMP + beta-nicotinamide D-nucleotide.. In terms of biological role, DNA ligase that catalyzes the formation of phosphodiester linkages between 5'-phosphoryl and 3'-hydroxyl groups in double-stranded DNA using NAD as a coenzyme and as the energy source for the reaction. It is essential for DNA replication and repair of damaged DNA. In Burkholderia cenocepacia (strain ATCC BAA-245 / DSM 16553 / LMG 16656 / NCTC 13227 / J2315 / CF5610) (Burkholderia cepacia (strain J2315)), this protein is DNA ligase.